The sequence spans 141 residues: Alpha-lactalbumin (141 aa).

Residues 1–19 (MMPLVPLLLVSIVFPGIQA) form the signal peptide. The C-type lysozyme domain maps to 20-141 (TQLTRCELTE…ENLEQWVCKK (122 aa)). 4 disulfides stabilise this stretch: C25/C139, C47/C130, C80/C96, and C92/C110. N64 carries N-linked (GlcNAc...) asparagine glycosylation. Residues D101, D106, and D107 each coordinate Ca(2+).

The protein belongs to the glycosyl hydrolase 22 family. In terms of assembly, lactose synthase (LS) is a heterodimer of a catalytic component, beta1,4-galactosyltransferase (beta4Gal-T1) and a regulatory component, alpha-lactalbumin (LA). As to expression, mammary gland specific. Secreted in milk.

It is found in the secreted. Regulatory subunit of lactose synthase, changes the substrate specificity of galactosyltransferase in the mammary gland making glucose a good acceptor substrate for this enzyme. This enables LS to synthesize lactose, the major carbohydrate component of milk. In other tissues, galactosyltransferase transfers galactose onto the N-acetylglucosamine of the oligosaccharide chains in glycoproteins. The protein is Alpha-lactalbumin (LALBA) of Oryctolagus cuniculus (Rabbit).